We begin with the raw amino-acid sequence, 330 residues long: DNA-directed RNA polymerase subunit alpha (330 aa).

The interval 1–235 is alpha N-terminal domain (alpha-NTD); that stretch reads MVREKVKVST…DLFIHFLHAK (235 aa). The interval 270–330 is alpha C-terminal domain (alpha-CTD); the sequence is IALKYIFIDQ…KQILGILEKK (61 aa).

It belongs to the RNA polymerase alpha chain family. As to quaternary structure, in plastids the minimal PEP RNA polymerase catalytic core is composed of four subunits: alpha, beta, beta', and beta''. When a (nuclear-encoded) sigma factor is associated with the core the holoenzyme is formed, which can initiate transcription.

It localises to the plastid. The protein resides in the chloroplast. It catalyses the reaction RNA(n) + a ribonucleoside 5'-triphosphate = RNA(n+1) + diphosphate. Its function is as follows. DNA-dependent RNA polymerase catalyzes the transcription of DNA into RNA using the four ribonucleoside triphosphates as substrates. The sequence is that of DNA-directed RNA polymerase subunit alpha (rpoA) from Gossypium barbadense (Sea Island cotton).